The chain runs to 966 residues: Alanine--tRNA ligase, cytoplasmic (966 aa).

H604, H608, C723, and H727 together coordinate Zn(2+).

Belongs to the class-II aminoacyl-tRNA synthetase family. Monomer. Zn(2+) is required as a cofactor.

Its subcellular location is the cytoplasm. It carries out the reaction tRNA(Ala) + L-alanine + ATP = L-alanyl-tRNA(Ala) + AMP + diphosphate. In terms of biological role, catalyzes the attachment of alanine to tRNA(Ala) in a two-step reaction: alanine is first activated by ATP to form Ala-AMP and then transferred to the acceptor end of tRNA(Ala). Also edits incorrectly charged tRNA(Ala) via its editing domain. This is Alanine--tRNA ligase, cytoplasmic from Drosophila melanogaster (Fruit fly).